A 139-amino-acid chain; its full sequence is Actin-depolymerizing factor 6 (139 aa).

Residues 5–139 enclose the ADF-H domain; the sequence is ASGMAVGDEC…SMDIVKARAL (135 aa).

It belongs to the actin-binding proteins ADF family.

In terms of biological role, actin-depolymerizing protein. Severs actin filaments (F-actin) and binds to actin monomers. In Oryza sativa subsp. japonica (Rice), this protein is Actin-depolymerizing factor 6 (ADF6).